A 41-amino-acid chain; its full sequence is Bacteriocin (41 aa).

Cys9 and Cys14 are disulfide-bonded.

It localises to the secreted. Bacteriocin active against S.aureus, S.typhi, B.thuringiensis, Klebsiella sp., E.coli KL16 and E.coli Gj137. The chain is Bacteriocin from Lactococcus sp.